The following is a 513-amino-acid chain: Flagellin A (513 aa).

This sequence belongs to the bacterial flagellin family. As to quaternary structure, heteromer of FlaA and FlaB. FlaB is located proximal to the hook while the remainder of the filament is composed of the predominant FlaA.

The protein localises to the secreted. The protein resides in the bacterial flagellum. Functionally, flagellin is the subunit protein which polymerizes to form the filaments of bacterial flagella. Important for motility and virulence. This Helicobacter felis (strain ATCC 49179 / CCUG 28539 / NCTC 12436 / CS1) protein is Flagellin A (flaA).